We begin with the raw amino-acid sequence, 877 residues long: Probable linoleate 9S-lipoxygenase 4 (877 aa).

One can recognise a PLAT domain in the interval 38 to 165 (GDFHASLLDG…NYQYERVFFA (128 aa)). One can recognise a Lipoxygenase domain in the interval 168–877 (TYLPSKMPAP…AMGIPNSISI (710 aa)). Positions 229 to 252 (GSQELPYPRRGRTGRAPTKTDPNT) are disordered. 5 residues coordinate Fe cation: His-528, His-533, His-719, Asn-723, and Ile-877.

It belongs to the lipoxygenase family. Fe cation serves as cofactor.

The catalysed reaction is (9Z,12Z)-octadecadienoate + O2 = (9S)-hydroperoxy-(10E,12Z)-octadecadienoate. Its pathway is lipid metabolism; oxylipin biosynthesis. Plant lipoxygenase may be involved in a number of diverse aspects of plant physiology including growth and development, pest resistance, and senescence or responses to wounding. Catalyzes the hydroperoxidation of lipids containing a cis,cis-1,4-pentadiene structure. This is Probable linoleate 9S-lipoxygenase 4 from Oryza sativa subsp. japonica (Rice).